We begin with the raw amino-acid sequence, 919 residues long: Coiled-coil domain-containing protein 66 (919 aa).

Disordered regions lie at residues 145–166 (KEET…KDEN), 456–505 (ERDR…RERE), 724–744 (ERNN…LPSP), and 762–816 (LKSD…EPSH). Residues 150–161 (QDSLHLNNTSNQ) are compositionally biased toward polar residues. Residues 467–558 (HQKAITAQVE…EQRIRELAQK (92 aa)) adopt a coiled-coil conformation. Positions 570–919 (GGYGLDDVSG…NQEENFNSSF (350 aa)) are mediates localization to cilia, centrosomes and spindle microtubules and the interaction with PCM1, CEP290, CEP104 and CSPP1.

Homodimer; disulfide-linked. Interacts with CEP290. Interacts with PCM1. Interacts with ARMC9, TOGARAM1, CSPP1 and CEP104. Interacts with CDK5RAP2, CEP152, CEP192, TBG1 and PRC1. As to expression, expressed in retina and blood. Expressed in retina, mainly in photoreceptors but also in outer plexiform and ganglion cell layers (at protein level).

The protein localises to the cytoplasm. It is found in the cytoskeleton. The protein resides in the microtubule organizing center. It localises to the centrosome. Its subcellular location is the centriolar satellite. The protein localises to the cell projection. It is found in the cilium. The protein resides in the cilium basal body. It localises to the cilium axoneme. Its subcellular location is the photoreceptor inner segment. The protein localises to the photoreceptor outer segment. Its function is as follows. Microtubule-binding protein required for ciliogenesis. May function in ciliogenesis by mediating the transport of proteins like BBS4 to the cilium, but also through the organization of the centriolar satellites. Required for the assembly of signaling-competent cilia with proper structure and length. Mediates this function in part by regulating transition zone assembly and basal body recruitment of the IFT-B complex. Cooperates with the ciliopathy proteins CSPP1 and CEP104 during cilium length regulation. Plays two important roles during cell division. First, is required for mitotic progression via regulation of spindle assembly, organization and orientation, levels of spindle microtubules (MTs), kinetochore-fiber integrity, and chromosome alignment. Second, functions during cytokinesis in part by regulating assembly and organization of central spindle and midbody MTs. Plays a role in retina morphogenesis and/or homeostasis. The sequence is that of Coiled-coil domain-containing protein 66 (CCDC66) from Canis lupus familiaris (Dog).